Reading from the N-terminus, the 204-residue chain is Holliday junction branch migration complex subunit RuvA (204 aa).

Residues 1 to 67 (MIGYLEGKIL…QPKPVLIGFN (67 aa)) are domain I. The domain II stretch occupies residues 68–145 (SLEEREFFER…VFAGEHGGEP (78 aa)). The flexible linker stretch occupies residues 146 to 156 (AGPAPVEENFH). Residues 156 to 204 (HLLVLDVLVNQLGHKAAEAKELINQAIKRNPAISSPEELFDEVYRGETG) are domain III.

It belongs to the RuvA family. As to quaternary structure, homotetramer. Forms an RuvA(8)-RuvB(12)-Holliday junction (HJ) complex. HJ DNA is sandwiched between 2 RuvA tetramers; dsDNA enters through RuvA and exits via RuvB. An RuvB hexamer assembles on each DNA strand where it exits the tetramer. Each RuvB hexamer is contacted by two RuvA subunits (via domain III) on 2 adjacent RuvB subunits; this complex drives branch migration. In the full resolvosome a probable DNA-RuvA(4)-RuvB(12)-RuvC(2) complex forms which resolves the HJ.

Its subcellular location is the cytoplasm. In terms of biological role, the RuvA-RuvB-RuvC complex processes Holliday junction (HJ) DNA during genetic recombination and DNA repair, while the RuvA-RuvB complex plays an important role in the rescue of blocked DNA replication forks via replication fork reversal (RFR). RuvA specifically binds to HJ cruciform DNA, conferring on it an open structure. The RuvB hexamer acts as an ATP-dependent pump, pulling dsDNA into and through the RuvAB complex. HJ branch migration allows RuvC to scan DNA until it finds its consensus sequence, where it cleaves and resolves the cruciform DNA. This chain is Holliday junction branch migration complex subunit RuvA, found in Desulfatibacillum aliphaticivorans.